We begin with the raw amino-acid sequence, 612 residues long: Vitamin B12 transporter BtuB (612 aa).

Positions M1–A20 are cleaved as a signal peptide. Positions D26–N33 match the TonB box motif. In terms of domain architecture, TBDR plug spans P38–T152. Cyanocob(III)alamin is bound by residues S85, N92, and V110 to S111. Residues K155–F612 enclose the TBDR beta-barrel domain. The next 3 membrane-spanning stretches (beta stranded) occupy residues T158–G165, Y169–Q178, and T184–T195. Ca(2+) is bound by residues D199, Q211, D213, and D215. Transmembrane regions (beta stranded) follow at residues F217–E227 and D232–N248. Y249, D250, and D261 together coordinate Ca(2+). 14 consecutive transmembrane segments (beta stranded) span residues R263–N277, E279–N296, T309–V325, H328–W337, Y353–G369, F371–D381, F385–I400, Y403–N417, Q434–E443, V449–N458, Y473–F490, P494–A509, R517–W529, and D535–D550. A cyanocob(III)alamin-binding site is contributed by T309. Residue R517 coordinates cyanocob(III)alamin. Cyanocob(III)alamin is bound at residue Y551. The next 3 membrane-spanning stretches (beta stranded) occupy residues P556 to S570, I583 to V594, and A600 to F612. A TonB C-terminal box motif is present at residues Y595–F612.

It belongs to the TonB-dependent receptor family. BtuB (TC 1.B.14.3.1) subfamily.

It is found in the cell outer membrane. Its function is as follows. Involved in the active translocation of vitamin B12 (cyanocobalamin) across the outer membrane to the periplasmic space. It derives its energy for transport by interacting with the trans-periplasmic membrane protein TonB. This Citrobacter freundii protein is Vitamin B12 transporter BtuB.